We begin with the raw amino-acid sequence, 220 residues long: MRVSRFNPRNRGFTLIELMIVVAIIGILAAIAIPNFIKFQARSKQSEAKTNLKALYTAQKSFFSEKDRYSDFANEIGFAPERGNRYGYRVSAAAGDCEVRNAADLPVPAAGVPCISNDSFRFGANSAIDDPTPVVARFVPQGAAGWNTTLGVQPTIADCPNCNFFAGARGNADNEATFDDWVIAGFEGSGQVGPCSEAGNVASGTPYNTRNDVACDGAAQ.

The propeptide at 1–12 is leader sequence; that stretch reads MRVSRFNPRNRG. Phe13 bears the N-methylphenylalanine mark. The chain crosses the membrane as a helical span at residues 13–33; sequence FTLIELMIVVAIIGILAAIAI.

It belongs to the N-Me-Phe pilin family.

The protein localises to the fimbrium. It localises to the membrane. With respect to regulation, the two-component PilS2/PilR2 is required for proper assembly of T4P and regulation. Functionally, major component of the type IV pili that are required for social gliding motility through cycles of extension and retraction. Extended pili are composed of thousands of copies of PilA and retract upon binding to extracellular polysaccharides and thereby pull the cell forward. The chain is Type IV major pilin protein PilA (pilA) from Myxococcus xanthus (strain DK1622).